The chain runs to 478 residues: Glycogen synthase (478 aa).

Lysine 15 contacts ADP-alpha-D-glucose.

The protein belongs to the glycosyltransferase 1 family. Bacterial/plant glycogen synthase subfamily.

It carries out the reaction [(1-&gt;4)-alpha-D-glucosyl](n) + ADP-alpha-D-glucose = [(1-&gt;4)-alpha-D-glucosyl](n+1) + ADP + H(+). It participates in glycan biosynthesis; glycogen biosynthesis. Synthesizes alpha-1,4-glucan chains using ADP-glucose. This Clostridium botulinum (strain Eklund 17B / Type B) protein is Glycogen synthase.